A 46-amino-acid chain; its full sequence is Iota-conotoxin-like M11.1 (46 aa).

Intrachain disulfides connect Cys-5/Cys-19, Cys-12/Cys-22, Cys-18/Cys-27, and Cys-21/Cys-38. Met-44 carries the post-translational modification D-methionine. Position 46 (Arg-46) is a propeptide, removed by a carboxypeptidase.

The protein belongs to the conotoxin I1 superfamily. Expressed by the venom duct.

The protein resides in the secreted. Its function is as follows. Iota-conotoxins bind to voltage-gated sodium channels (Nav) and act as agonists by shifting the voltage-dependence of activation to more hyperpolarized levels. Produces general excitatory symptoms. This is Iota-conotoxin-like M11.1 from Conus magus (Magical cone).